The following is a 98-amino-acid chain: Integration host factor subunit beta (98 aa).

Belongs to the bacterial histone-like protein family. As to quaternary structure, heterodimer of an alpha and a beta chain.

In terms of biological role, this protein is one of the two subunits of integration host factor, a specific DNA-binding protein that functions in genetic recombination as well as in transcriptional and translational control. This Pseudomonas syringae pv. tomato (strain ATCC BAA-871 / DC3000) protein is Integration host factor subunit beta.